The primary structure comprises 512 residues: AMP phosphorylase (512 aa).

Residues Gly166, 192–197 (SRAITG), and Thr201 contribute to the AMP site. Asp254 (proton donor) is an active-site residue. AMP-binding residues include Ser262 and Lys286.

Belongs to the thymidine/pyrimidine-nucleoside phosphorylase family. Type 2 subfamily.

It catalyses the reaction AMP + phosphate = alpha-D-ribose 1,5-bisphosphate + adenine. The catalysed reaction is CMP + phosphate = cytosine + alpha-D-ribose 1,5-bisphosphate. It carries out the reaction UMP + phosphate = alpha-D-ribose 1,5-bisphosphate + uracil. Its function is as follows. Catalyzes the conversion of AMP and phosphate to adenine and ribose 1,5-bisphosphate (R15P). Exhibits phosphorylase activity toward CMP and UMP in addition to AMP. Functions in an archaeal AMP degradation pathway, together with R15P isomerase and RubisCO. The chain is AMP phosphorylase from Methanothrix thermoacetophila (strain DSM 6194 / JCM 14653 / NBRC 101360 / PT) (Methanosaeta thermophila).